The primary structure comprises 541 residues: Chaperonin GroEL 2 (541 aa).

Residues 29–32 (TLGP), 86–90 (DGTTT), G413, 476–478 (NAA), and D492 contribute to the ATP site.

It belongs to the chaperonin (HSP60) family. Forms a cylinder of 14 subunits composed of two heptameric rings stacked back-to-back. Interacts with the co-chaperonin GroES.

It is found in the secreted. The protein resides in the capsule. The protein localises to the cell surface. Its subcellular location is the cell wall. The enzyme catalyses ATP + H2O + a folded polypeptide = ADP + phosphate + an unfolded polypeptide.. Together with its co-chaperonin GroES, plays an essential role in assisting protein folding. The GroEL-GroES system forms a nano-cage that allows encapsulation of the non-native substrate proteins and provides a physical environment optimized to promote and accelerate protein folding. This Mycobacterium avium (strain 104) protein is Chaperonin GroEL 2.